The chain runs to 202 residues: LexA repressor (202 aa).

The segment at residues 28–48 is a DNA-binding region (H-T-H motif); that stretch reads RAEIAQRLGFRSPNAAEEHLK. Residues Ser-119 and Lys-156 each act as for autocatalytic cleavage activity in the active site.

Belongs to the peptidase S24 family. Homodimer.

The enzyme catalyses Hydrolysis of Ala-|-Gly bond in repressor LexA.. Its function is as follows. Represses a number of genes involved in the response to DNA damage (SOS response), including recA and lexA. Binds to the 16 bp palindromic sequence 5'-CTGTATATATATACAG-3'. In the presence of single-stranded DNA, RecA interacts with LexA causing an autocatalytic cleavage which disrupts the DNA-binding part of LexA, leading to derepression of the SOS regulon and eventually DNA repair. In Yersinia pseudotuberculosis serotype O:1b (strain IP 31758), this protein is LexA repressor.